Here is a 519-residue protein sequence, read N- to C-terminus: DNA-directed RNA polymerase subunit Rpo2N (519 aa).

The protein belongs to the RNA polymerase beta chain family. As to quaternary structure, part of the RNA polymerase complex.

It is found in the cytoplasm. The enzyme catalyses RNA(n) + a ribonucleoside 5'-triphosphate = RNA(n+1) + diphosphate. In terms of biological role, DNA-dependent RNA polymerase (RNAP) catalyzes the transcription of DNA into RNA using the four ribonucleoside triphosphates as substrates. The Rpo2 subunit (Rpo2N and Rpo2C in this organism) is implicated in DNA promoter recognition and in nucleotide binding. The polypeptide is DNA-directed RNA polymerase subunit Rpo2N (Methanothermobacter thermautotrophicus (strain ATCC 29096 / DSM 1053 / JCM 10044 / NBRC 100330 / Delta H) (Methanobacterium thermoautotrophicum)).